The primary structure comprises 394 residues: Elongation factor Tu 2 (394 aa).

One can recognise a tr-type G domain in the interval 10-204; that stretch reads KPHVNVGTIG…ALDSYIPEPE (195 aa). The tract at residues 19–26 is G1; the sequence is GHVDHGKT. Position 19–26 (19–26) interacts with GTP; sequence GHVDHGKT. A Mg(2+)-binding site is contributed by threonine 26. Positions 60–64 are G2; sequence GITIN. A G3 region spans residues 81-84; that stretch reads DCPG. GTP is bound by residues 81 to 85 and 136 to 139; these read DCPGH and NKCD. Residues 136-139 are G4; that stretch reads NKCD. The G5 stretch occupies residues 174–176; sequence SAL.

It belongs to the TRAFAC class translation factor GTPase superfamily. Classic translation factor GTPase family. EF-Tu/EF-1A subfamily. As to quaternary structure, monomer.

The protein localises to the cytoplasm. It carries out the reaction GTP + H2O = GDP + phosphate + H(+). Functionally, GTP hydrolase that promotes the GTP-dependent binding of aminoacyl-tRNA to the A-site of ribosomes during protein biosynthesis. This Shewanella loihica (strain ATCC BAA-1088 / PV-4) protein is Elongation factor Tu 2.